The primary structure comprises 298 residues: Elongation factor Ts (298 aa).

The tract at residues 79-82 is involved in Mg(2+) ion dislocation from EF-Tu; sequence TDFV.

Belongs to the EF-Ts family.

The protein resides in the cytoplasm. In terms of biological role, associates with the EF-Tu.GDP complex and induces the exchange of GDP to GTP. It remains bound to the aminoacyl-tRNA.EF-Tu.GTP complex up to the GTP hydrolysis stage on the ribosome. The chain is Elongation factor Ts from Cereibacter sphaeroides (strain ATCC 17029 / ATH 2.4.9) (Rhodobacter sphaeroides).